A 240-amino-acid chain; its full sequence is UDP-2,3-diacylglucosamine hydrolase (240 aa).

Positions 8, 10, 41, 79, and 114 each coordinate Mn(2+). 79–80 provides a ligand contact to substrate; sequence NR. The substrate site is built by Asp122, Ser160, Asn164, Lys167, and His195. Mn(2+) contacts are provided by His195 and His197.

It belongs to the LpxH family. Mn(2+) serves as cofactor.

The protein localises to the cell inner membrane. The catalysed reaction is UDP-2-N,3-O-bis[(3R)-3-hydroxytetradecanoyl]-alpha-D-glucosamine + H2O = 2-N,3-O-bis[(3R)-3-hydroxytetradecanoyl]-alpha-D-glucosaminyl 1-phosphate + UMP + 2 H(+). It participates in glycolipid biosynthesis; lipid IV(A) biosynthesis; lipid IV(A) from (3R)-3-hydroxytetradecanoyl-[acyl-carrier-protein] and UDP-N-acetyl-alpha-D-glucosamine: step 4/6. Hydrolyzes the pyrophosphate bond of UDP-2,3-diacylglucosamine to yield 2,3-diacylglucosamine 1-phosphate (lipid X) and UMP by catalyzing the attack of water at the alpha-P atom. Involved in the biosynthesis of lipid A, a phosphorylated glycolipid that anchors the lipopolysaccharide to the outer membrane of the cell. This is UDP-2,3-diacylglucosamine hydrolase from Pectobacterium carotovorum subsp. carotovorum (strain PC1).